Reading from the N-terminus, the 247-residue chain is Carboxy-S-adenosyl-L-methionine synthase (247 aa).

S-adenosyl-L-methionine contacts are provided by residues Tyr-39, 64-66, 89-90, 117-118, Asn-132, and Arg-199; these read GCS, DN, and DI.

Belongs to the class I-like SAM-binding methyltransferase superfamily. Cx-SAM synthase family. In terms of assembly, homodimer.

It catalyses the reaction prephenate + S-adenosyl-L-methionine = carboxy-S-adenosyl-L-methionine + 3-phenylpyruvate + H2O. Catalyzes the conversion of S-adenosyl-L-methionine (SAM) to carboxy-S-adenosyl-L-methionine (Cx-SAM). The sequence is that of Carboxy-S-adenosyl-L-methionine synthase from Escherichia fergusonii (strain ATCC 35469 / DSM 13698 / CCUG 18766 / IAM 14443 / JCM 21226 / LMG 7866 / NBRC 102419 / NCTC 12128 / CDC 0568-73).